Here is a 416-residue protein sequence, read N- to C-terminus: MALSITRGLLLLAALCCLAPISLAGVLQGHAVQETDDTSHQEAACHKIAPNLANFAFSIYHHLAHQSNTSNIFFSPVSIASAFAMLSLGAKGNTHTEILKGLGFNLTELAEAEIHKGFQHLLHTLNQPNHQLQLTTGNGLFINESAKLVDTFLEDVKNLYHSEAFSINFRDAEEAKKKINDYVEKGSHGKIVELVKVLDPNTVFALVNYISFKGKWEKPFEMKHTTERDFHVDEQTTVKVPMMNRLGMFDLHYCDKLASWVLLLDYVGNVTACFILPDLGKLQQLEDKLNNELLAKFLEKKYASSANLHLPKLSISETYDLKSVLGDVGITEVFSDRADLSGITKEQPLKVSKALHKAALTIDEKGTEAVGSTFLEAIPMSLPPDVEFNRPFLCILYDRNTKSPLFVGKVVNPTQA.

Residues 1–24 form the signal peptide; it reads MALSITRGLLLLAALCCLAPISLA. N68, N105, N143, and N269 each carry an N-linked (GlcNAc...) asparagine glycan. Residues 371–390 are RCL; the sequence is GSTFLEAIPMSLPPDVEFNR. S381 is subject to Phosphoserine.

It belongs to the serpin family. In terms of assembly, interacts with CELA2A. Interacts with ERGIC3 and LMAN1/ERGIC53. Interacts with PRSS1/Trypsin. In terms of tissue distribution, plasma.

It is found in the secreted. Functionally, inhibitor of serine proteases. Its primary target is elastase, but it also has a moderate affinity for plasmin and thrombin. Inhibits trypsin, chymotrypsin and plasminogen activator. In Bos taurus (Bovine), this protein is Alpha-1-antiproteinase (SERPINA1).